Reading from the N-terminus, the 422-residue chain is MEPKRLEIPGSVLDDLCSRFILHIPSEERDNAIRVCFQIELAHWFYLDFYMQNTPGLPQCGIRDFAKAVFSHCPFLLPQGEDVEKILDEWKEYKMGVPTYGAIILDETLENVLLVQGYLAKSGWGFPKGKVNKEEAPHDCAAREVFEETGFDIKDYICKDDYIELRINDQLARLYIIPGVPKDTKFNPKTRREIRNIEWFSIEKLPCHRNDMTPKSKLGLAPNKFFMAIPFIRPLRDWLSRRFGDSSDSDNGFSSAGSTPARPTVEKLSRTKFRHSQQLFPEGSPSDQWVKHRQPLQQKSHSNHGEVSDLLKAKNQNMRGNGRKQYQDSPNQKKRANGVHGQPAKQQNPLVKCEKKLHPRKLQDNFETDATCDLPCSGEEPSVEHAEGHSVACNGHCKFPFSSRAFLSFKFDQNAIMKILDL.

The 132-residue stretch at 95–226 (MGVPTYGAII…KLGLAPNKFF (132 aa)) folds into the Nudix hydrolase domain. Positions 129–150 (GKVNKEEAPHDCAAREVFEETG) match the Nudix box motif. Mn(2+) contacts are provided by Glu-144 and Glu-148. Residues Ser-246, Ser-247, Ser-249, Ser-276, and Ser-284 each carry the phosphoserine modification. Residues 247-347 (SDSDNGFSSA…GVHGQPAKQQ (101 aa)) form a disordered region. The segment covering 249–258 (SDNGFSSAGS) has biased composition (low complexity). Basic and acidic residues predominate over residues 303 to 312 (NHGEVSDLLK).

The protein belongs to the Nudix hydrolase family. DCP2 subfamily. Found in a mRNA decay complex with LSM1, LSM3, LSM4, EXOSC2, EXOSC4, EXOSC10, PARN, XRN1, CNOT6, UPF1, UPF2 and UPF3B. Forms a complex with DCP1A, EDC3, DDX6 and EDC4/HEDLS, within this complex directly interacts with EDC4/HEDLS. Interacts with DPC1B, UPF1, UPF2 and UPF3B. Associates with polysomes. Interacts (via N-terminus and C-terminus) with TRIM21 (via N-terminus and C-terminus). Interacts with LIMD1, WTIP and AJUBA. Interacts with DDX17 in an RNA-dependent manner. Interacts with ZC3HAV1. Interacts with APOBEC3G in an RNA-dependent manner. Interacts with ZFP36L1 (via N-terminus). Interacts with NBDY. Mn(2+) serves as cofactor. It depends on Mg(2+) as a cofactor. In terms of tissue distribution, strongly expressed in brain and testis. Weakly expressed in lung. Not detected in heart, liver, kidney and muscle (at protein level).

The protein localises to the cytoplasm. Its subcellular location is the P-body. It localises to the nucleus. It catalyses the reaction a 5'-end (N(7)-methyl 5'-triphosphoguanosine)-ribonucleoside in mRNA + H2O = N(7)-methyl-GDP + a 5'-end phospho-ribonucleoside in mRNA + 2 H(+). Decapping metalloenzyme that catalyzes the cleavage of the cap structure on mRNAs. Removes the 7-methyl guanine cap structure from mRNA molecules, yielding a 5'-phosphorylated mRNA fragment and 7m-GDP. Necessary for the degradation of mRNAs, both in normal mRNA turnover and in nonsense-mediated mRNA decay. Plays a role in replication-dependent histone mRNA degradation. Has higher activity towards mRNAs that lack a poly(A) tail. Has no activity towards a cap structure lacking an RNA moiety. The presence of a N(6)-methyladenosine methylation at the second transcribed position of mRNAs (N(6),2'-O-dimethyladenosine cap; m6A(m)) provides resistance to DCP2-mediated decapping. Blocks autophagy in nutrient-rich conditions by repressing the expression of ATG-related genes through degradation of their transcripts. This Mus musculus (Mouse) protein is m7GpppN-mRNA hydrolase (Dcp2).